A 219-amino-acid polypeptide reads, in one-letter code: Cysteine dioxygenase (219 aa).

Residues H106, H108, and H166 each coordinate Fe cation. A cross-link (3'-(S-cysteinyl)-tyrosine (Cys-Tyr)) is located at residues C113 to Y183.

The protein belongs to the cysteine dioxygenase family. Fe cation serves as cofactor. The thioether cross-link between Cys-113 and Tyr-183 plays a structural role through stabilizing the Fe(2+) ion, and prevents the production of highly damaging free hydroxyl radicals by holding the oxygen radical via hydroxyl hydrogen.

It catalyses the reaction L-cysteine + O2 = 3-sulfino-L-alanine + H(+). Its function is as follows. Cysteine dioxygenase involved in sulfite formation from cysteine. Required for keratin degradation and plays an important role in filamentous growth and virulence. The chain is Cysteine dioxygenase from Arthroderma benhamiae (Trichophyton mentagrophytes).